The following is a 331-amino-acid chain: tRNA N6-adenosine threonylcarbamoyltransferase (331 aa).

Residues histidine 108, histidine 112, and tyrosine 129 each coordinate a divalent metal cation. Substrate-binding positions include 129-133 (YASGG), aspartate 161, glycine 176, glutamate 180, and asparagine 261. Aspartate 289 lines the a divalent metal cation pocket.

Belongs to the KAE1 / TsaD family. In terms of assembly, component of the EKC/KEOPS complex composed of at least BUD32, CGI121, GON7, KAE1 and PCC1; the whole complex dimerizes. It depends on a divalent metal cation as a cofactor.

The protein localises to the cytoplasm. It localises to the nucleus. The catalysed reaction is L-threonylcarbamoyladenylate + adenosine(37) in tRNA = N(6)-L-threonylcarbamoyladenosine(37) in tRNA + AMP + H(+). Its function is as follows. Component of the EKC/KEOPS complex that is required for the formation of a threonylcarbamoyl group on adenosine at position 37 (t(6)A37) in tRNAs that read codons beginning with adenine. The complex is probably involved in the transfer of the threonylcarbamoyl moiety of threonylcarbamoyl-AMP (TC-AMP) to the N6 group of A37. KAE1 likely plays a direct catalytic role in this reaction, but requires other protein(s) of the complex to fulfill this activity. The EKC/KEOPS complex also promotes both telomere uncapping and telomere elongation. The complex is required for efficient recruitment of transcriptional coactivators. The polypeptide is tRNA N6-adenosine threonylcarbamoyltransferase (Encephalitozoon cuniculi (strain GB-M1) (Microsporidian parasite)).